The chain runs to 442 residues: Inner membrane protein PPF-1, chloroplastic (442 aa).

The Lumenal portion of the chain corresponds to 1–108; sequence MAKTLISSPS…EFVLKVLKDG (108 aa). Residues 109 to 129 traverse the membrane as a helical segment; it reads LSSVHVPYSYGFAIILLTVIV. The Stromal portion of the chain corresponds to 130 to 183; it reads KAATLPLTKQQVESTLAMQNLQPKIKAIQERYAGNQERIQLETSRLYTQAGVNP. The chain crosses the membrane as a helical span at residues 184-204; it reads LAGCLPTLATIPVWIGLYQAL. Over 205–296 the chain is Lumenal; it reads SNVANEGLLT…QKNTLLIFKF (92 aa). Residues 297–317 form a helical membrane-spanning segment; the sequence is LPLMIGYFSLSVPSGLTIYWF. Over 318–442 the chain is Stromal; the sequence is TNNVLSTAQQ…SKRSKRKPVA (125 aa). Disordered stretches follow at residues 350–371 and 390–442; these read AGQA…RQLK and PLAS…KPVA. Positions 358–371 are enriched in basic and acidic residues; that stretch reads SKPEKGGERFRQLK. Residues 414–427 are compositionally biased toward polar residues; the sequence is ESNTSKVSQEVQSF. Basic residues predominate over residues 431–442; the sequence is RRSKRSKRKPVA.

It belongs to the OXA1/ALB3/YidC (TC 2.A.9.2) family. Highly expressed in apical buds. Low levels of expression in leaves. Not expressed in roots, and stems.

The protein localises to the plastid. Its subcellular location is the chloroplast thylakoid membrane. Its function is as follows. May be required for the insertion of some integral membrane proteins into the chloroplast thylakoid membrane. May play a role in inhibiting senescence. This is Inner membrane protein PPF-1, chloroplastic (PPF-1) from Pisum sativum (Garden pea).